The sequence spans 219 residues: GTP-binding protein Rit1 (219 aa).

GTP is bound by residues 28–35 (GAGGVGKS), 75–79 (DTAGQ), and 134–137 (NKSD).

Belongs to the small GTPase superfamily. Ras family. As to quaternary structure, interacts with AFDN, the C-terminal domain of RALGDS and RLF, but not with RIN1 and PIK3CA. RLF binds exclusively to the active GTP-bound form. Strongly interacts with BRAF, but only weakly with RAF1. BARF and RAF1 association is dependent upon the GTP-bound state. Interacts with RGL3. Expressed in many tissues.

The protein localises to the cell membrane. The enzyme catalyses GTP + H2O = GDP + phosphate + H(+). Its activity is regulated as follows. Alternates between an inactive form bound to GDP and an active form bound to GTP. In terms of biological role, plays a crucial role in coupling NGF stimulation to the activation of both EPHB2 and MAPK14 signaling pathways and in NGF-dependent neuronal differentiation. Involved in ELK1 transactivation through the Ras-MAPK signaling cascade that mediates a wide variety of cellular functions, including cell proliferation, survival, and differentiation. This Mus musculus (Mouse) protein is GTP-binding protein Rit1 (Rit1).